Consider the following 326-residue polypeptide: Probable UDP-3-O-acyl-N-acetylglucosamine deacetylase 2, mitochondrial (326 aa).

The transit peptide at M1 to Y21 directs the protein to the mitochondrion. H109, H281, and D285 together coordinate Zn(2+).

It belongs to the LpxC family. Zn(2+) is required as a cofactor.

It is found in the mitochondrion. It carries out the reaction a UDP-3-O-[(3R)-3-hydroxyacyl]-N-acetyl-alpha-D-glucosamine + H2O = a UDP-3-O-[(3R)-3-hydroxyacyl]-alpha-D-glucosamine + acetate. Its pathway is glycolipid biosynthesis; lipid IV(A) biosynthesis; lipid IV(A) from (3R)-3-hydroxytetradecanoyl-[acyl-carrier-protein] and UDP-N-acetyl-alpha-D-glucosamine: step 2/6. Involved in the biosynthesis of lipid A, a phosphorylated glycolipid that in bacteria anchors the lipopolysaccharide to the outer membrane of the cell. Lipid A-like molecules in plants may serve as structural components of the outer membranes of mitochondria and/or chloroplasts, or may be involved in signal transduction or plant defense responses (Potential). This is Probable UDP-3-O-acyl-N-acetylglucosamine deacetylase 2, mitochondrial (LPXC2) from Arabidopsis thaliana (Mouse-ear cress).